The following is a 37-amino-acid chain: Large ribosomal subunit protein bL36c (37 aa).

Belongs to the bacterial ribosomal protein bL36 family.

It localises to the plastid. It is found in the chloroplast. This chain is Large ribosomal subunit protein bL36c, found in Ostreococcus tauri.